The chain runs to 333 residues: D-alanine--D-alanine ligase (333 aa).

An ATP-grasp domain is found at 124-329 (KMWFSALGIR…FAQYLSGNIM (206 aa)). 154–209 (ALEKWGSIFIKAASQGSSVGCYRVDNKEQLANSLEEAFKYSPYVVVEKTINARELE) provides a ligand contact to ATP. The Mg(2+) site is built by Asp283, Glu296, and Asn298.

It belongs to the D-alanine--D-alanine ligase family. Mg(2+) is required as a cofactor. Mn(2+) serves as cofactor.

The protein resides in the cytoplasm. The catalysed reaction is 2 D-alanine + ATP = D-alanyl-D-alanine + ADP + phosphate + H(+). It functions in the pathway cell wall biogenesis; peptidoglycan biosynthesis. Its function is as follows. Cell wall formation. The polypeptide is D-alanine--D-alanine ligase (Shewanella halifaxensis (strain HAW-EB4)).